Consider the following 162-residue polypeptide: Ribosome maturation factor RimM (162 aa).

A PRC barrel domain is found at 90–161 (EDCYYEADIV…KIIIKPLEVW (72 aa)).

The protein belongs to the RimM family. Binds ribosomal protein uS19.

The protein localises to the cytoplasm. An accessory protein needed during the final step in the assembly of 30S ribosomal subunit, possibly for assembly of the head region. Essential for efficient processing of 16S rRNA. May be needed both before and after RbfA during the maturation of 16S rRNA. It has affinity for free ribosomal 30S subunits but not for 70S ribosomes. In Clostridium novyi (strain NT), this protein is Ribosome maturation factor RimM.